A 447-amino-acid polypeptide reads, in one-letter code: Cytochrome c biogenesis protein CcsB (447 aa).

Helical transmembrane passes span 28–48 (LRLA…GTVI), 87–107 (TWWY…CTFR), and 173–193 (IGPI…IWGA).

This sequence belongs to the Ccs1/CcsB family. May interact with CcsA.

It localises to the cellular thylakoid membrane. Its function is as follows. Required during biogenesis of c-type cytochromes (cytochrome c6 and cytochrome f) at the step of heme attachment. The polypeptide is Cytochrome c biogenesis protein CcsB (Microcystis aeruginosa (strain NIES-843 / IAM M-2473)).